The chain runs to 675 residues: DNA ligase (675 aa).

Residues 43-47 (DYEYD), 92-93 (SM), and E122 each bind NAD(+). The N6-AMP-lysine intermediate role is filled by K124. NAD(+) contacts are provided by R145, E179, K295, and K319. Positions 413, 416, 431, and 436 each coordinate Zn(2+). Residues 597–675 (SPDGYYKGKK…ETEAIAKFEQ (79 aa)) form the BRCT domain.

It belongs to the NAD-dependent DNA ligase family. LigA subfamily. The cofactor is Mg(2+). Mn(2+) is required as a cofactor.

The enzyme catalyses NAD(+) + (deoxyribonucleotide)n-3'-hydroxyl + 5'-phospho-(deoxyribonucleotide)m = (deoxyribonucleotide)n+m + AMP + beta-nicotinamide D-nucleotide.. Its function is as follows. DNA ligase that catalyzes the formation of phosphodiester linkages between 5'-phosphoryl and 3'-hydroxyl groups in double-stranded DNA using NAD as a coenzyme and as the energy source for the reaction. It is essential for DNA replication and repair of damaged DNA. In Pediococcus pentosaceus (strain ATCC 25745 / CCUG 21536 / LMG 10740 / 183-1w), this protein is DNA ligase.